A 377-amino-acid polypeptide reads, in one-letter code: Erythronate-4-phosphate dehydrogenase (377 aa).

Substrate is bound by residues S45 and T66. Positions 146 and 175 each coordinate NAD(+). R208 is a catalytic residue. D232 lines the NAD(+) pocket. The active site involves E237. The Proton donor role is filled by H254. G257 lines the NAD(+) pocket. A substrate-binding site is contributed by Y258.

This sequence belongs to the D-isomer specific 2-hydroxyacid dehydrogenase family. PdxB subfamily. Homodimer.

The protein localises to the cytoplasm. The catalysed reaction is 4-phospho-D-erythronate + NAD(+) = (R)-3-hydroxy-2-oxo-4-phosphooxybutanoate + NADH + H(+). Its pathway is cofactor biosynthesis; pyridoxine 5'-phosphate biosynthesis; pyridoxine 5'-phosphate from D-erythrose 4-phosphate: step 2/5. Its function is as follows. Catalyzes the oxidation of erythronate-4-phosphate to 3-hydroxy-2-oxo-4-phosphonooxybutanoate. The polypeptide is Erythronate-4-phosphate dehydrogenase (Sodalis glossinidius (strain morsitans)).